The following is a 429-amino-acid chain: Glucose-6-phosphate isomerase (429 aa).

Glutamate 282 (proton donor) is an active-site residue. Active-site residues include histidine 303 and lysine 418.

Belongs to the GPI family.

The protein resides in the cytoplasm. It catalyses the reaction alpha-D-glucose 6-phosphate = beta-D-fructose 6-phosphate. It participates in carbohydrate biosynthesis; gluconeogenesis. Its pathway is carbohydrate degradation; glycolysis; D-glyceraldehyde 3-phosphate and glycerone phosphate from D-glucose: step 2/4. Catalyzes the reversible isomerization of glucose-6-phosphate to fructose-6-phosphate. In Mesomycoplasma hyopneumoniae (strain J / ATCC 25934 / NCTC 10110) (Mycoplasma hyopneumoniae), this protein is Glucose-6-phosphate isomerase.